The chain runs to 179 residues: Large ribosomal subunit protein uL5 (179 aa).

This sequence belongs to the universal ribosomal protein uL5 family. In terms of assembly, part of the 50S ribosomal subunit; part of the 5S rRNA/L5/L18/L25 subcomplex. Contacts the 5S rRNA and the P site tRNA. Forms a bridge to the 30S subunit in the 70S ribosome.

Its function is as follows. This is one of the proteins that bind and probably mediate the attachment of the 5S RNA into the large ribosomal subunit, where it forms part of the central protuberance. In the 70S ribosome it contacts protein S13 of the 30S subunit (bridge B1b), connecting the 2 subunits; this bridge is implicated in subunit movement. Contacts the P site tRNA; the 5S rRNA and some of its associated proteins might help stabilize positioning of ribosome-bound tRNAs. The polypeptide is Large ribosomal subunit protein uL5 (Synechococcus sp. (strain CC9605)).